The following is a 287-amino-acid chain: Small ribosomal subunit biogenesis GTPase RsgA (287 aa).

The CP-type G domain maps to 61–218 (SSELIRPTVA…LVDTPGFTTL (158 aa)). GTP-binding positions include 110–113 (NKED) and 161–169 (GPSGAGKST). Positions 242, 247, 249, and 255 each coordinate Zn(2+).

It belongs to the TRAFAC class YlqF/YawG GTPase family. RsgA subfamily. As to quaternary structure, monomer. Associates with 30S ribosomal subunit, binds 16S rRNA. It depends on Zn(2+) as a cofactor.

Its subcellular location is the cytoplasm. In terms of biological role, one of several proteins that assist in the late maturation steps of the functional core of the 30S ribosomal subunit. Helps release RbfA from mature subunits. May play a role in the assembly of ribosomal proteins into the subunit. Circularly permuted GTPase that catalyzes slow GTP hydrolysis, GTPase activity is stimulated by the 30S ribosomal subunit. The chain is Small ribosomal subunit biogenesis GTPase RsgA from Clostridium perfringens (strain ATCC 13124 / DSM 756 / JCM 1290 / NCIMB 6125 / NCTC 8237 / Type A).